We begin with the raw amino-acid sequence, 246 residues long: MKNIKIEICAGSFEDAVLAEKAGASRIELNSSLFLGGLTPSLGTLKLVKKETHLEVMAMVRPRAAGFFYSSYEYKTMLEDAKLFIDNGADGLVFGFLKKDGTIDAKRCEALIKIAESRDKVFHRAIDVVPDPLKALDELISLGFTRVLTSGQEPTAYEGADLIAKMVKRAKGRIEILPGGGITEKNASKIIKLTGVDQIHFAALKRREEPSTKANPSIYYGGALYPPEDSIEVAGLDEMTKVIKSL.

Belongs to the CutC family.

The protein localises to the cytoplasm. The sequence is that of PF03932 family protein CutC from Treponema denticola (strain ATCC 35405 / DSM 14222 / CIP 103919 / JCM 8153 / KCTC 15104).